A 251-amino-acid chain; its full sequence is MDNETKATTFSKSTGLPRKRFYRARAHSNPLSDSHFPIPISPAHVDYSLHFPKFVEADNKFIKKVEFADIGCGFGGLLISLATLFPDTLMIGMELRDKVTEYVKERILALRRTSSEGQYENISVVRTNSMKYIPNYFEKGQLSKMFFLFPDPHFKEKNHRRRVISTHLLDEYAYVLRAGGIIYTITDVEELGEWMKSCLEKHPMFESLTQEELVSDPVVELLCSATEEGQKVARNGGQTFRAVFRRIAYVS.

S-adenosyl-L-methionine contacts are provided by residues Gly71, 94–95 (EL), 128–129 (NS), and Leu148. Asp151 is an active-site residue. 226–228 (TEE) is a binding site for S-adenosyl-L-methionine.

The protein belongs to the class I-like SAM-binding methyltransferase superfamily. TrmB family.

Its subcellular location is the nucleus. The catalysed reaction is guanosine(46) in tRNA + S-adenosyl-L-methionine = N(7)-methylguanosine(46) in tRNA + S-adenosyl-L-homocysteine. It participates in tRNA modification; N(7)-methylguanine-tRNA biosynthesis. In terms of biological role, catalyzes the formation of N(7)-methylguanine at position 46 (m7G46) in tRNA. The polypeptide is tRNA (guanine-N(7)-)-methyltransferase (Arabidopsis thaliana (Mouse-ear cress)).